A 198-amino-acid polypeptide reads, in one-letter code: ATP-dependent Clp protease proteolytic subunit (198 aa).

The active-site Nucleophile is Ser98. His123 is a catalytic residue.

The protein belongs to the peptidase S14 family. As to quaternary structure, fourteen ClpP subunits assemble into 2 heptameric rings which stack back to back to give a disk-like structure with a central cavity, resembling the structure of eukaryotic proteasomes.

It localises to the cytoplasm. The enzyme catalyses Hydrolysis of proteins to small peptides in the presence of ATP and magnesium. alpha-casein is the usual test substrate. In the absence of ATP, only oligopeptides shorter than five residues are hydrolyzed (such as succinyl-Leu-Tyr-|-NHMec, and Leu-Tyr-Leu-|-Tyr-Trp, in which cleavage of the -Tyr-|-Leu- and -Tyr-|-Trp bonds also occurs).. Functionally, cleaves peptides in various proteins in a process that requires ATP hydrolysis. Has a chymotrypsin-like activity. Plays a major role in the degradation of misfolded proteins. The polypeptide is ATP-dependent Clp protease proteolytic subunit (Levilactobacillus brevis (strain ATCC 367 / BCRC 12310 / CIP 105137 / JCM 1170 / LMG 11437 / NCIMB 947 / NCTC 947) (Lactobacillus brevis)).